Here is a 366-residue protein sequence, read N- to C-terminus: Putative ankyrin repeat protein RBE_0601 (366 aa).

ANK repeat units follow at residues 39-68 (KHGTALNRAIKLKDEKIITELLAKKVDINE), 94-124 (LPDEYLYKAVHQGRLDLVQYFIEEKNFDVNT), 131-160 (HGGAILSIATMGEHIDVINYLLKNGAIASQ), 162-186 (VISAILKGNIEILEKLFEYGATAHD), 210-239 (KSSNSETKEDLSNYVETLKFLLEHGGNPNA), and 250-280 (IALSALMDEPKNDTYKDICKLLIQYGADTSK).

The chain is Putative ankyrin repeat protein RBE_0601 from Rickettsia bellii (strain RML369-C).